Reading from the N-terminus, the 437-residue chain is Elongator complex protein 4 (437 aa).

The segment at 179–247 (FSKSSSPTTP…TKTGSQDSPL (69 aa)) is disordered. The segment covering 181–192 (KSSSPTTPSLEQ) has biased composition (polar residues). Phosphoserine is present on Ser183. Residues 220–237 (SANNNNNNNNNSSSVTSS) are compositionally biased toward low complexity. Phosphoserine is present on Ser242.

This sequence belongs to the ELP4 family. Component of the elongator complex composed of Elp1, Elp2, Elp3, Elp4, Elp5 and Elp6. The elongator complex associates with and stabilizes microtubules; efficient interaction requires the full complex.

Its subcellular location is the cytoplasm. It localises to the nucleus. It is found in the cytoskeleton. The protein resides in the spindle. The protein operates within tRNA modification; 5-methoxycarbonylmethyl-2-thiouridine-tRNA biosynthesis. Its function is as follows. Component of the elongator complex, which is required for multiple tRNA modifications, including mcm5U (5-methoxycarbonylmethyl uridine), mcm5s2U (5-methoxycarbonylmethyl-2-thiouridine), and ncm5U (5-carbamoylmethyl uridine). The elongator complex catalyzes the formation of carboxymethyluridine in the wobble base at position 34 in tRNAs. Binding by the elongator complex stabilizes microtubules and promotes their growth. This induces central spindle asymmetry, promoting polarized signaling endosome trafficking during asymmetric cell division and cell fate assignation of sensory organ precursor cells. The polypeptide is Elongator complex protein 4 (Drosophila melanogaster (Fruit fly)).